Reading from the N-terminus, the 350-residue chain is Glyoxylate reductase 1 (350 aa).

At threonine 31 the chain carries Phosphothreonine. NAD(+)-binding positions include 173–174 (RI), 252–254 (TAR), and aspartate 278. Arginine 254 is an active-site residue. Glutamate 283 is a catalytic residue. Histidine 301 (proton donor) is an active-site residue. Residue 301–304 (HMGT) participates in NAD(+) binding.

Belongs to the D-isomer specific 2-hydroxyacid dehydrogenase family.

It localises to the cytoplasm. It is found in the nucleus. The protein resides in the mitochondrion. The enzyme catalyses glycolate + NAD(+) = glyoxylate + NADH + H(+). It catalyses the reaction glycolate + NADP(+) = glyoxylate + NADPH + H(+). The catalysed reaction is (R)-glycerate + NAD(+) = 3-hydroxypyruvate + NADH + H(+). It carries out the reaction (R)-glycerate + NADP(+) = 3-hydroxypyruvate + NADPH + H(+). Glyoxylate reductase that reversibly reduces glyoxylate to glycolate, or alternatively hydroxypyruvate to D-glycerate, using either NADPH or NADH as a cosubstrate. Does not act as a hydroxyisocaproate dehydrogenase even though it also has minor activity on alpha-ketoisocaproate. This chain is Glyoxylate reductase 1, found in Saccharomyces cerevisiae (strain ATCC 204508 / S288c) (Baker's yeast).